The primary structure comprises 62 residues: Large ribosomal subunit protein eL37 (62 aa).

4 residues coordinate Zn(2+): C20, C23, C35, and C38. A C4-type zinc finger spans residues 20-38 (CRRCGRVSYNVKKGYCAAC).

The protein belongs to the eukaryotic ribosomal protein eL37 family. In terms of assembly, part of the 50S ribosomal subunit. Zn(2+) serves as cofactor.

Binds to the 23S rRNA. In Pyrococcus furiosus (strain ATCC 43587 / DSM 3638 / JCM 8422 / Vc1), this protein is Large ribosomal subunit protein eL37.